A 248-amino-acid polypeptide reads, in one-letter code: Myelin protein P0 (248 aa).

The N-terminal stretch at M1 to A29 is a signal peptide. One can recognise an Ig-like V-type domain in the interval I30–T143. The Extracellular segment spans residues I30–R153. An intrachain disulfide couples C50 to C127. Residue N122 is glycosylated (N-linked (GlcNAc...) (complex) asparagine). A helical transmembrane segment spans residues Y154 to I179. Residues R180 to K248 are Cytoplasmic-facing. Position 210 is a phosphoserine; by PKC (S210). Residues M222–K248 are disordered. Residues D224–K248 are compositionally biased toward basic and acidic residues. S226 and S228 each carry phosphoserine. S233 is modified (phosphoserine; by PKC). 2 positions are modified to phosphoserine: S237 and S243.

Belongs to the myelin P0 protein family. Homodimer and homotetramer. In terms of processing, N-glycosylated; contains sulfate-substituted glycan. Found only in peripheral nervous system Schwann cells.

It localises to the cell membrane. Its function is as follows. Is an adhesion molecule necessary for normal myelination in the peripheral nervous system. It mediates adhesion between adjacent myelin wraps and ultimately drives myelin compaction. This Mus musculus (Mouse) protein is Myelin protein P0 (Mpz).